Reading from the N-terminus, the 207-residue chain is Nuclear transcription factor Y subunit beta (207 aa).

An a domain region spans residues 1–52 (MTMDGDSSTTDASQLGISADYIGGSHYVIQPHDDTEDSMNDHEDTNGSKESF). Positions 27–52 (YVIQPHDDTEDSMNDHEDTNGSKESF) are disordered. Over residues 39–52 (MNDHEDTNGSKESF) the composition is skewed to basic and acidic residues. A b domain region spans residues 53 to 142 (REQDIYLPIA…PLKLYLQKFR (90 aa)). Residues 59 to 65 (LPIANVA) mediate DNA binding. Residues 86 to 97 (VQECVSEFISFI) form a subunit association domain (SAD) region. Lys-140 participates in a covalent cross-link: Glycyl lysine isopeptide (Lys-Gly) (interchain with G-Cter in ubiquitin). Residues 143–207 (EAMKGEKGIG…ISGVQQIQFS (65 aa)) are c domain.

The protein belongs to the NFYB/HAP3 subunit family. As to quaternary structure, heterotrimeric transcription factor composed of three components, NF-YA, NF-YB and NF-YC. NF-YB and NF-YC must interact and dimerize for NF-YA association and DNA binding. Interacts with C1QBP. Monoubiquitination at Lys-140 plays an important role in transcriptional activation by allowing the deposition of histone H3 methylations as well as histone H2B monoubiquitination at 'Lys-121'.

The protein localises to the nucleus. Functionally, component of the sequence-specific heterotrimeric transcription factor (NF-Y) which specifically recognizes a 5'-CCAAT-3' box motif found in the promoters of its target genes. NF-Y can function as both an activator and a repressor, depending on its interacting cofactors. This chain is Nuclear transcription factor Y subunit beta (NFYB), found in Bos taurus (Bovine).